The chain runs to 208 residues: Exosome complex component CSL4 homolog (208 aa).

Component of the RNA exosome complex. In terms of tissue distribution, ubiquitously expressed.

The protein localises to the nucleus. Its subcellular location is the nucleolus. It localises to the nucleoplasm. In terms of biological role, non-catalytic component of the RNA exosome complex which has 3'-&gt;5' exoribonuclease activity and participates in a multitude of cellular RNA processing and degradation events. Involved in regulation of antisense ribosomal siRNA production. Involved in response to cold-warm shock. The chain is Exosome complex component CSL4 homolog from Caenorhabditis elegans.